A 269-amino-acid chain; its full sequence is Hydroxyethylthiazole kinase (269 aa).

Methionine 46 contributes to the substrate binding site. Residues arginine 121 and threonine 166 each coordinate ATP. Residue glycine 193 participates in substrate binding.

This sequence belongs to the Thz kinase family. It depends on Mg(2+) as a cofactor.

The enzyme catalyses 5-(2-hydroxyethyl)-4-methylthiazole + ATP = 4-methyl-5-(2-phosphooxyethyl)-thiazole + ADP + H(+). It functions in the pathway cofactor biosynthesis; thiamine diphosphate biosynthesis; 4-methyl-5-(2-phosphoethyl)-thiazole from 5-(2-hydroxyethyl)-4-methylthiazole: step 1/1. Functionally, catalyzes the phosphorylation of the hydroxyl group of 4-methyl-5-beta-hydroxyethylthiazole (THZ). The polypeptide is Hydroxyethylthiazole kinase (Limosilactobacillus reuteri (strain DSM 20016) (Lactobacillus reuteri)).